The primary structure comprises 385 residues: 8-amino-7-oxononanoate synthase (385 aa).

Arg-21 is a substrate binding site. 108-109 (GF) is a binding site for pyridoxal 5'-phosphate. Residue His-133 participates in substrate binding. Positions 179, 207, and 233 each coordinate pyridoxal 5'-phosphate. N6-(pyridoxal phosphate)lysine is present on Lys-236. Thr-352 contributes to the substrate binding site.

Belongs to the class-II pyridoxal-phosphate-dependent aminotransferase family. BioF subfamily. In terms of assembly, homodimer. Requires pyridoxal 5'-phosphate as cofactor.

It catalyses the reaction 6-carboxyhexanoyl-[ACP] + L-alanine + H(+) = (8S)-8-amino-7-oxononanoate + holo-[ACP] + CO2. The protein operates within cofactor biosynthesis; biotin biosynthesis. In terms of biological role, catalyzes the decarboxylative condensation of pimeloyl-[acyl-carrier protein] and L-alanine to produce 8-amino-7-oxononanoate (AON), [acyl-carrier protein], and carbon dioxide. The chain is 8-amino-7-oxononanoate synthase from Salmonella paratyphi A (strain ATCC 9150 / SARB42).